The primary structure comprises 196 residues: Mpv17-like protein (196 aa).

The Cytoplasmic portion of the chain corresponds to 1–16 (MAGWWPALSRAARRHP). The segment at 16 to 55 (PWPTNVLLYGSLVSAGDALQQRLQGREANWRQTRRVATLV) is targeting to peroxisomes. A helical membrane pass occupies residues 17–34 (WPTNVLLYGSLVSAGDAL). Over 35–50 (QQRLQGREANWRQTRR) the chain is Lumenal. A helical transmembrane segment spans residues 51-67 (VATLVVTFHANFNYVWL). At 68-90 (RLLERALPGRAPHALLAKLLCDQ) the chain is on the cytoplasmic side. Residues 91 to 108 (VVGAPIAVSAFYVGMSIL) traverse the membrane as a helical segment. Topologically, residues 109 to 150 (QGKDDIFLDLKQKFWNTYLSGLMYWPFVQLTNFSLVPVQWRT) are lumenal. A helical membrane pass occupies residues 151–167 (AYAGVCGFLWATFICFS). Over 168-196 (QQSGDGTFKSAFTILYTKGTSATEGYPKK) the chain is Cytoplasmic.

The protein belongs to the peroxisomal membrane protein PXMP2/4 family. Isoform 1 is detected in the kidney (at protein level). Isoform 1 and isoform 2 are expressed in the kidney, heart, liver, lung, pancreas and skeletal muscle.

Its subcellular location is the peroxisome membrane. Participates in reactive oxygen species metabolism by up- or down-regulation of the genes of antioxidant enzymes. Protective against the mitochondrial apoptotic cascade. The sequence is that of Mpv17-like protein (MPV17L) from Homo sapiens (Human).